We begin with the raw amino-acid sequence, 98 residues long: Defensin (98 aa).

3 disulfides stabilise this stretch: Cys61/Cys88, Cys74/Cys94, and Cys78/Cys96.

It belongs to the invertebrate defensin family. Type 1 subfamily.

The chain is Defensin from Mamestra brassicae (Cabbage moth).